Consider the following 261-residue polypeptide: Auxin-responsive protein IAA10 (261 aa).

The segment at methionine 1–threonine 43 is disordered. The EAR-like (transcriptional repression) motif lies at leucine 45–leucine 49. The segment at leucine 62–threonine 90 is disordered. Over residues aspartate 80–alanine 89 the composition is skewed to low complexity. The 103-residue stretch at serine 151 to threonine 253 folds into the PB1 domain.

Belongs to the Aux/IAA family. Homodimers and heterodimers. Preferentially expressed in vegetative organs.

It is found in the nucleus. Functionally, aux/IAA proteins are short-lived transcriptional factors that function as repressors of early auxin response genes at low auxin concentrations. Repression is thought to result from the interaction with auxin response factors (ARFs), proteins that bind to the auxin-responsive promoter element (AuxRE). Formation of heterodimers with ARF proteins may alter their ability to modulate early auxin response genes expression. This is Auxin-responsive protein IAA10 (IAA10) from Arabidopsis thaliana (Mouse-ear cress).